An 88-amino-acid polypeptide reads, in one-letter code: DNA-directed RNA polymerase subunit omega (88 aa).

This sequence belongs to the RNA polymerase subunit omega family. As to quaternary structure, the RNAP catalytic core consists of 2 alpha, 1 beta, 1 beta' and 1 omega subunit. When a sigma factor is associated with the core the holoenzyme is formed, which can initiate transcription.

It catalyses the reaction RNA(n) + a ribonucleoside 5'-triphosphate = RNA(n+1) + diphosphate. Promotes RNA polymerase assembly. Latches the N- and C-terminal regions of the beta' subunit thereby facilitating its interaction with the beta and alpha subunits. The protein is DNA-directed RNA polymerase subunit omega of Yersinia pestis (strain Pestoides F).